The chain runs to 268 residues: MERYESLFAQLKERKEGAFVPFVTLGDPGIEQSLKIIDTLIEAGADALELGIPFSDPLADGPTIQNATLRAFAAGVTPAQCIEMLALIRQKHPTIPIGLLMYANLVFNKGIDEFYAQCEKVGVDSVLVADVPVEESAPFRQAALRHNVAPIFICPPNADDDLLRQIASYGRGYTYLLSRAGVTGAENRAALPLNHLVAKLKEYNAAPPLQGFGISAPDQVKAAIDAGAAGAISGSAIVKIIEQHINEPEKMLAALKAFVQPMKAATRS.

Active-site proton acceptor residues include Glu-49 and Asp-60.

Belongs to the TrpA family. In terms of assembly, tetramer of two alpha and two beta chains.

It catalyses the reaction (1S,2R)-1-C-(indol-3-yl)glycerol 3-phosphate + L-serine = D-glyceraldehyde 3-phosphate + L-tryptophan + H2O. It functions in the pathway amino-acid biosynthesis; L-tryptophan biosynthesis; L-tryptophan from chorismate: step 5/5. The alpha subunit is responsible for the aldol cleavage of indoleglycerol phosphate to indole and glyceraldehyde 3-phosphate. The sequence is that of Tryptophan synthase alpha chain from Shigella dysenteriae serotype 1 (strain Sd197).